The sequence spans 872 residues: G-type lectin S-receptor-like serine/threonine-protein kinase At5g35370 (872 aa).

The N-terminal stretch at 1-26 (MKSTFLLLLLLLSLNLLFVFVSCASS) is a signal peptide. The Extracellular portion of the chain corresponds to 27–443 (IEFVYPNFTA…NNNRGGSSFP (417 aa)). Residues N33, N148, and N239 are each glycosylated (N-linked (GlcNAc...) asparagine). The region spanning 35 to 156 (TASNLRFVDS…LNVSLWESFD (122 aa)) is the Bulb-type lectin domain. The region spanning 283 to 322 (PMDSCQIPFVCGKLGLCNLDNASENQSCSCPDEMRMDAGK) is the EGF-like; atypical domain. 2 cysteine pairs are disulfide-bonded: C287-C299 and C293-C310. N-linked (GlcNAc...) asparagine glycosylation is found at N303, N307, N342, N379, and N389. One can recognise a PAN domain in the interval 338–423 (CEARNISYLE…HDLIGYVKLS (86 aa)). Disulfide bonds link C372–C394 and C376–C382. Residues 444–464 (VIALVLLPCSGFFLLIALGLL) form a helical membrane-spanning segment. Residues 465–872 (WWRRCAVMRY…IASQEVSGPR (408 aa)) lie on the Cytoplasmic side of the membrane. In terms of domain architecture, Protein kinase spans 515–814 (ENFKMQIGSG…GSIPLGNPRM (300 aa)). Residues 521–529 (IGSGGFGSV) and K543 each bind ATP. Residues 603–620 (GNGPVLEWQERFDIALGT) are caM-binding. D639 serves as the catalytic Proton acceptor. Residue S656 is modified to Phosphoserine. T673 is modified (phosphothreonine). A phosphoserine mark is found at S716 and S859. The tract at residues 836-872 (QNGESETMVFHRRESSNSGGSRQSASYIASQEVSGPR) is disordered. Residues 851-861 (SNSGGSRQSAS) are compositionally biased toward low complexity. Positions 862-872 (YIASQEVSGPR) are enriched in polar residues.

Belongs to the protein kinase superfamily. Ser/Thr protein kinase family.

The protein localises to the cell membrane. It catalyses the reaction L-seryl-[protein] + ATP = O-phospho-L-seryl-[protein] + ADP + H(+). The enzyme catalyses L-threonyl-[protein] + ATP = O-phospho-L-threonyl-[protein] + ADP + H(+). This is G-type lectin S-receptor-like serine/threonine-protein kinase At5g35370 from Arabidopsis thaliana (Mouse-ear cress).